A 126-amino-acid polypeptide reads, in one-letter code: Histone H2B type 1-O (126 aa).

Residues 1–12 (MPDPAKSAPAPK) are compositionally biased toward low complexity. Residues 1–35 (MPDPAKSAPAPKKGSKKAVTKAQKKDGKKRKRSRK) are disordered. Pro2 carries the post-translational modification N-acetylproline; partial. An N6-(2-hydroxyisobutyryl)lysine; alternate modification is found at Lys6. Lys6 is subject to N6-(beta-hydroxybutyryl)lysine; alternate. Lys6 carries the post-translational modification N6-acetyllysine; alternate. Lys6 is subject to N6-butyryllysine; alternate. N6-crotonyllysine; alternate is present on Lys6. N6-lactoyllysine; alternate is present on Lys6. Lys6 participates in a covalent cross-link: Glycyl lysine isopeptide (Lys-Gly) (interchain with G-Cter in SUMO2); alternate. Ser7 carries the ADP-ribosylserine modification. An N6-(beta-hydroxybutyryl)lysine; alternate modification is found at Lys12. Residues Lys12 and Lys13 each carry the N6-acetyllysine; alternate modification. An N6-crotonyllysine; alternate mark is found at Lys12 and Lys13. Position 12 is an N6-lactoyllysine; alternate (Lys12). Lys13 carries the N6-(2-hydroxyisobutyryl)lysine; alternate modification. At Ser15 the chain carries Phosphoserine; by STK4/MST1. N6-acetyllysine; alternate is present on residues Lys16, Lys17, Lys21, and Lys24. Lys16, Lys17, Lys21, and Lys24 each carry N6-crotonyllysine; alternate. Residues Lys16, Lys17, Lys21, and Lys24 each carry the N6-lactoyllysine; alternate modification. N6-(beta-hydroxybutyryl)lysine; alternate is present on residues Lys17 and Lys21. Lys17 carries the post-translational modification N6-glutaryllysine; alternate. 2 positions are modified to N6-(2-hydroxyisobutyryl)lysine; alternate: Lys21 and Lys24. The residue at position 21 (Lys21) is an N6-butyryllysine; alternate. A Glycyl lysine isopeptide (Lys-Gly) (interchain with G-Cter in SUMO2); alternate cross-link involves residue Lys21. Lys25 is subject to N6-(2-hydroxyisobutyryl)lysine. N6-(2-hydroxyisobutyryl)lysine; alternate is present on Lys35. N6-(beta-hydroxybutyryl)lysine; alternate is present on Lys35. Lys35 carries the post-translational modification N6-crotonyllysine; alternate. Position 35 is an N6-glutaryllysine; alternate (Lys35). N6-succinyllysine; alternate is present on Lys35. Lys35 participates in a covalent cross-link: Glycyl lysine isopeptide (Lys-Gly) (interchain with G-Cter in ubiquitin); alternate. A PolyADP-ribosyl glutamic acid modification is found at Glu36. Ser37 is modified (phosphoserine; by AMPK). N6-(2-hydroxyisobutyryl)lysine; alternate occurs at positions 44, 47, and 58. An N6-lactoyllysine; alternate modification is found at Lys44. N6-glutaryllysine; alternate occurs at positions 44 and 47. Lys47 bears the N6-methyllysine; alternate mark. An N6,N6-dimethyllysine; alternate modification is found at Lys58. Arg80 is modified (dimethylated arginine). An N6-(2-hydroxyisobutyryl)lysine; alternate modification is found at Lys86. Lys86 bears the N6-(beta-hydroxybutyryl)lysine; alternate mark. The residue at position 86 (Lys86) is an N6-acetyllysine; alternate. The residue at position 86 (Lys86) is an N6-lactoyllysine; alternate. Lys86 is subject to N6,N6,N6-trimethyllysine; alternate. Omega-N-methylarginine is present on residues Arg87 and Arg93. The residue at position 109 (Lys109) is an N6-(2-hydroxyisobutyryl)lysine; alternate. Lys109 is modified (N6-lactoyllysine; alternate). An N6-glutaryllysine; alternate modification is found at Lys109. An N6-methyllysine; alternate modification is found at Lys109. O-linked (GlcNAc) serine glycosylation is present at Ser113. Residue Thr116 is modified to Phosphothreonine. N6-(2-hydroxyisobutyryl)lysine; alternate is present on residues Lys117 and Lys121. An N6-(beta-hydroxybutyryl)lysine; alternate mark is found at Lys117 and Lys121. Lys117 and Lys121 each carry N6-lactoyllysine; alternate. Residues Lys117 and Lys121 each carry the N6-glutaryllysine; alternate modification. Lys117 and Lys121 each carry N6-succinyllysine; alternate. Lys117 is modified (N6-malonyllysine; alternate). Lys117 is subject to N6-methylated lysine; alternate. A Glycyl lysine isopeptide (Lys-Gly) (interchain with G-Cter in ubiquitin); alternate cross-link involves residue Lys121.

It belongs to the histone H2B family. In terms of assembly, the nucleosome is a histone octamer containing two molecules each of H2A, H2B, H3 and H4 assembled in one H3-H4 heterotetramer and two H2A-H2B heterodimers. The octamer wraps approximately 147 bp of DNA. Monoubiquitination at Lys-35 (H2BK34Ub) by the MSL1/MSL2 dimer is required for histone H3 'Lys-4' (H3K4me) and 'Lys-79' (H3K79me) methylation and transcription activation at specific gene loci, such as HOXA9 and MEIS1 loci. Similarly, monoubiquitination at Lys-121 (H2BK120Ub) by the RNF20/40 complex gives a specific tag for epigenetic transcriptional activation and is also prerequisite for histone H3 'Lys-4' and 'Lys-79' methylation. It also functions cooperatively with the FACT dimer to stimulate elongation by RNA polymerase II. H2BK120Ub also acts as a regulator of mRNA splicing: deubiquitination by USP49 is required for efficient cotranscriptional splicing of a large set of exons. Post-translationally, phosphorylation at Ser-37 (H2BS36ph) by AMPK in response to stress promotes transcription. Phosphorylated on Ser-15 (H2BS14ph) by STK4/MST1 during apoptosis; which facilitates apoptotic chromatin condensation. Also phosphorylated on Ser-15 in response to DNA double strand breaks (DSBs), and in correlation with somatic hypermutation and immunoglobulin class-switch recombination. In terms of processing, glcNAcylation at Ser-113 promotes monoubiquitination of Lys-121. It fluctuates in response to extracellular glucose, and associates with transcribed genes. ADP-ribosylated by PARP1 or PARP2 on Ser-7 (H2BS6ADPr) in response to DNA damage. H2BS6ADPr promotes recruitment of CHD1L. Poly ADP-ribosylation on Glu-36 (H2BE35ADPr) by PARP1 regulates adipogenesis: it inhibits phosphorylation at Ser-37 (H2BS36ph), thereby blocking expression of pro-adipogenetic genes. Post-translationally, crotonylation (Kcr) is specifically present in male germ cells and marks testis-specific genes in post-meiotic cells, including X-linked genes that escape sex chromosome inactivation in haploid cells. Crotonylation marks active promoters and enhancers and confers resistance to transcriptional repressors. It is also associated with post-meiotically activated genes on autosomes. In terms of processing, lactylated in macrophages by EP300/P300 by using lactoyl-CoA directly derived from endogenous or exogenous lactate, leading to stimulates gene transcription.

The protein resides in the nucleus. The protein localises to the chromosome. Its function is as follows. Core component of nucleosome. Nucleosomes wrap and compact DNA into chromatin, limiting DNA accessibility to the cellular machineries which require DNA as a template. Histones thereby play a central role in transcription regulation, DNA repair, DNA replication and chromosomal stability. DNA accessibility is regulated via a complex set of post-translational modifications of histones, also called histone code, and nucleosome remodeling. The sequence is that of Histone H2B type 1-O from Homo sapiens (Human).